Reading from the N-terminus, the 511-residue chain is Limonoid UDP-glucosyltransferase (511 aa).

His19 functions as the Proton acceptor in the catalytic mechanism. Residue His19 coordinates an anthocyanidin. 6 residues coordinate UDP-alpha-D-glucose: Gln344, His359, Trp362, Asn363, Ser364, and Glu367. An anthocyanidin is bound at residue Gly382. UDP-alpha-D-glucose-binding residues include Asp383 and Gln384.

The protein belongs to the UDP-glycosyltransferase family.

It carries out the reaction limonin + UDP-alpha-D-glucose + H2O = limonin 17-beta-D-glucoside + UDP + 2 H(+). Involved in the glucosylation of limonoids. In Citrus unshiu (Satsuma mandarin), this protein is Limonoid UDP-glucosyltransferase.